A 457-amino-acid chain; its full sequence is Siroheme synthase (457 aa).

The tract at residues 1 to 204 is precorrin-2 dehydrogenase /sirohydrochlorin ferrochelatase; the sequence is MDHLPIFCQL…ADEKAVNATT (204 aa). NAD(+) is bound by residues 22–23 and 43–44; these read DV and LT. S128 is subject to Phosphoserine. Positions 216 to 457 are uroporphyrinogen-III C-methyltransferase; sequence GEVVLVGAGP…RDKLNWFSNY (242 aa). P225 serves as a coordination point for S-adenosyl-L-methionine. The active-site Proton acceptor is the D248. Residue K270 is the Proton donor of the active site. S-adenosyl-L-methionine is bound by residues 301–303, I306, 331–332, M382, and G411; these read GGD and TA.

This sequence in the N-terminal section; belongs to the precorrin-2 dehydrogenase / sirohydrochlorin ferrochelatase family. In the C-terminal section; belongs to the precorrin methyltransferase family.

The enzyme catalyses uroporphyrinogen III + 2 S-adenosyl-L-methionine = precorrin-2 + 2 S-adenosyl-L-homocysteine + H(+). It catalyses the reaction precorrin-2 + NAD(+) = sirohydrochlorin + NADH + 2 H(+). It carries out the reaction siroheme + 2 H(+) = sirohydrochlorin + Fe(2+). It functions in the pathway cofactor biosynthesis; adenosylcobalamin biosynthesis; precorrin-2 from uroporphyrinogen III: step 1/1. The protein operates within cofactor biosynthesis; adenosylcobalamin biosynthesis; sirohydrochlorin from precorrin-2: step 1/1. Its pathway is porphyrin-containing compound metabolism; siroheme biosynthesis; precorrin-2 from uroporphyrinogen III: step 1/1. It participates in porphyrin-containing compound metabolism; siroheme biosynthesis; siroheme from sirohydrochlorin: step 1/1. It functions in the pathway porphyrin-containing compound metabolism; siroheme biosynthesis; sirohydrochlorin from precorrin-2: step 1/1. In terms of biological role, multifunctional enzyme that catalyzes the SAM-dependent methylations of uroporphyrinogen III at position C-2 and C-7 to form precorrin-2 via precorrin-1. Then it catalyzes the NAD-dependent ring dehydrogenation of precorrin-2 to yield sirohydrochlorin. Finally, it catalyzes the ferrochelation of sirohydrochlorin to yield siroheme. The protein is Siroheme synthase of Salmonella heidelberg (strain SL476).